The following is a 461-amino-acid chain: Elongation factor 1-alpha, oocyte form (461 aa).

G2 carries the n,N,N-trimethylglycine modification. One can recognise a tr-type G domain in the interval K5–T242. Positions G14–S21 are G1. G14–S21 contacts GTP. Positions G70 to D74 are G2. Residues D91–G94 are G3. GTP is bound by residues D91–H95 and N153–D156. Residues N153–D156 are G4. The G5 stretch occupies residues S194–W196. 5-glutamyl glycerylphosphorylethanolamine is present on residues E301 and E374.

It belongs to the TRAFAC class translation factor GTPase superfamily. Classic translation factor GTPase family. EF-Tu/EF-1A subfamily. As to expression, oocyte.

The protein localises to the cytoplasm. In terms of biological role, this protein promotes the GTP-dependent binding of aminoacyl-tRNA to the A-site of ribosomes during protein biosynthesis. This Xenopus laevis (African clawed frog) protein is Elongation factor 1-alpha, oocyte form.